The chain runs to 27 residues: Protein YkiD (27 aa).

The protein is Protein YkiD of Escherichia coli (strain K12).